Here is a 54-residue protein sequence, read N- to C-terminus: Relaxin (54 aa).

Position 1 is a pyrrolidone carboxylic acid (Q1). Intrachain disulfides connect C10-C41, C22-C54, and C40-C45.

This sequence belongs to the insulin family. Heterodimer of a B chain and an A chain linked by two disulfide bonds.

It is found in the secreted. In terms of biological role, relaxin is an ovarian hormone that acts with estrogen to produce dilatation of the birth canal in many mammals. The chain is Relaxin from Balaenoptera acutorostrata (Common minke whale).